The primary structure comprises 259 residues: Deoxyribose-phosphate aldolase (259 aa).

The Proton donor/acceptor role is filled by Asp-102. Lys-167 acts as the Schiff-base intermediate with acetaldehyde in catalysis. The active-site Proton donor/acceptor is the Lys-201.

Belongs to the DeoC/FbaB aldolase family. DeoC type 2 subfamily.

It is found in the cytoplasm. The enzyme catalyses 2-deoxy-D-ribose 5-phosphate = D-glyceraldehyde 3-phosphate + acetaldehyde. Its pathway is carbohydrate degradation; 2-deoxy-D-ribose 1-phosphate degradation; D-glyceraldehyde 3-phosphate and acetaldehyde from 2-deoxy-alpha-D-ribose 1-phosphate: step 2/2. Functionally, catalyzes a reversible aldol reaction between acetaldehyde and D-glyceraldehyde 3-phosphate to generate 2-deoxy-D-ribose 5-phosphate. This is Deoxyribose-phosphate aldolase from Escherichia coli O45:K1 (strain S88 / ExPEC).